We begin with the raw amino-acid sequence, 158 residues long: Transcription elongation factor GreA (158 aa).

This sequence belongs to the GreA/GreB family.

Functionally, necessary for efficient RNA polymerase transcription elongation past template-encoded arresting sites. The arresting sites in DNA have the property of trapping a certain fraction of elongating RNA polymerases that pass through, resulting in locked ternary complexes. Cleavage of the nascent transcript by cleavage factors such as GreA or GreB allows the resumption of elongation from the new 3'terminus. GreA releases sequences of 2 to 3 nucleotides. The chain is Transcription elongation factor GreA from Pelobacter propionicus (strain DSM 2379 / NBRC 103807 / OttBd1).